The following is an 83-amino-acid chain: Cell division topological specificity factor (83 aa).

Belongs to the MinE family.

Its function is as follows. Prevents the cell division inhibition by proteins MinC and MinD at internal division sites while permitting inhibition at polar sites. This ensures cell division at the proper site by restricting the formation of a division septum at the midpoint of the long axis of the cell. This Acidithiobacillus ferrooxidans (strain ATCC 23270 / DSM 14882 / CIP 104768 / NCIMB 8455) (Ferrobacillus ferrooxidans (strain ATCC 23270)) protein is Cell division topological specificity factor.